Consider the following 44-residue polypeptide: uncharacterized protein (44 aa).

A helical transmembrane segment spans residues 4 to 24; sequence ISSILIRGGGVLIVVILLLWI.

The protein resides in the membrane. This is an uncharacterized protein from Ornithodoros (relapsing fever ticks).